Consider the following 93-residue polypeptide: Acylphosphatase (93 aa).

In terms of domain architecture, Acylphosphatase-like spans 7 to 93 (RLTAWVHGWV…TEQITGFSER (87 aa)). Residues R22 and N40 contribute to the active site.

It belongs to the acylphosphatase family.

It carries out the reaction an acyl phosphate + H2O = a carboxylate + phosphate + H(+). This Mycobacterium tuberculosis (strain ATCC 25177 / H37Ra) protein is Acylphosphatase (acyP).